Reading from the N-terminus, the 201-residue chain is Holliday junction resolvase RecU (201 aa).

Positions 85, 87, 100, and 119 each coordinate Mg(2+).

This sequence belongs to the RecU family. Requires Mg(2+) as cofactor.

Its subcellular location is the cytoplasm. The enzyme catalyses Endonucleolytic cleavage at a junction such as a reciprocal single-stranded crossover between two homologous DNA duplexes (Holliday junction).. In terms of biological role, endonuclease that resolves Holliday junction intermediates in genetic recombination. Cleaves mobile four-strand junctions by introducing symmetrical nicks in paired strands. Promotes annealing of linear ssDNA with homologous dsDNA. Required for DNA repair, homologous recombination and chromosome segregation. This Geobacillus thermodenitrificans (strain NG80-2) protein is Holliday junction resolvase RecU.